Reading from the N-terminus, the 714-residue chain is Fatty acid oxidation complex subunit alpha (714 aa).

Positions 1–190 (MEMASAFTLN…KLGLVDDVVP (190 aa)) are enoyl-CoA hydratase. A 3-hydroxyacyl-CoA dehydrogenase region spans residues 306-714 (APLNSVGILG…FWKTTATDLQ (409 aa)).

The protein in the N-terminal section; belongs to the enoyl-CoA hydratase/isomerase family. It in the central section; belongs to the 3-hydroxyacyl-CoA dehydrogenase family. As to quaternary structure, heterotetramer of two alpha chains (FadJ) and two beta chains (FadI).

It is found in the cytoplasm. It carries out the reaction a (3S)-3-hydroxyacyl-CoA = a (2E)-enoyl-CoA + H2O. It catalyses the reaction a 4-saturated-(3S)-3-hydroxyacyl-CoA = a (3E)-enoyl-CoA + H2O. The catalysed reaction is a (3S)-3-hydroxyacyl-CoA + NAD(+) = a 3-oxoacyl-CoA + NADH + H(+). The enzyme catalyses (3S)-3-hydroxybutanoyl-CoA = (3R)-3-hydroxybutanoyl-CoA. The protein operates within lipid metabolism; fatty acid beta-oxidation. In terms of biological role, catalyzes the formation of a hydroxyacyl-CoA by addition of water on enoyl-CoA. Also exhibits 3-hydroxyacyl-CoA epimerase and 3-hydroxyacyl-CoA dehydrogenase activities. The sequence is that of Fatty acid oxidation complex subunit alpha from Escherichia coli (strain UTI89 / UPEC).